We begin with the raw amino-acid sequence, 246 residues long: uncharacterized protein (246 aa).

Basic residues-rich tracts occupy residues 1–10 and 79–97; these read MVWRFQKHIG and TRRR…KAGR. Positions 1–184 are disordered; sequence MVWRFQKHIG…LPPAHVPPTL (184 aa). Residues 158 to 180 show a composition bias toward pro residues; the sequence is PPFPPPPPPGDPTPPSPLPPAHV.

This is an uncharacterized protein from Homo sapiens (Human).